The following is a 377-amino-acid chain: MAKQDYYEILGVSKTAEEREIKKAYKRLAMKYHPDRNQGDKEAEAKFKEIKEAYEILTDAQKRAAYDQYGHAAFEQGGMGGGGGFGGGADFSDIFGDVFGDIFGGGRGRQRAARGADLRYNMELTLEEAVRGVTKEIRIPTLEECDVCHGSGAKAGSKPQTCPTCHGAGQVQMRQGFFAVQQTCPHCQGRGTLIKDPCNKCHGHGRVEKTKTLSVKIPAGVDTGDRIRLAGEGEAGEHGAPAGDLYVQVQVKQHAIFEREGNNLYCEVPINFTMAALGGEIEVPTLDGRVNLKIPGETQTGKLFRMRGKGVKSVRGGAQGDLLCRVVVETPVGLNEKQKQLLKELQESFGGPTGENNSPRSKSFFDGVKKFFDDLTR.

Residues 5–70 (DYYEILGVSK…QKRAAYDQYG (66 aa)) enclose the J domain. The segment at 132 to 210 (GVTKEIRIPT…CHGHGRVEKT (79 aa)) adopts a CR-type zinc-finger fold. Cys-145, Cys-148, Cys-162, Cys-165, Cys-184, Cys-187, Cys-198, and Cys-201 together coordinate Zn(2+). CXXCXGXG motif repeat units lie at residues 145 to 152 (CDVCHGSG), 162 to 169 (CPTCHGAG), 184 to 191 (CPHCQGRG), and 198 to 205 (CNKCHGHG).

The protein belongs to the DnaJ family. Homodimer. The cofactor is Zn(2+).

It localises to the cytoplasm. Participates actively in the response to hyperosmotic and heat shock by preventing the aggregation of stress-denatured proteins and by disaggregating proteins, also in an autonomous, DnaK-independent fashion. Unfolded proteins bind initially to DnaJ; upon interaction with the DnaJ-bound protein, DnaK hydrolyzes its bound ATP, resulting in the formation of a stable complex. GrpE releases ADP from DnaK; ATP binding to DnaK triggers the release of the substrate protein, thus completing the reaction cycle. Several rounds of ATP-dependent interactions between DnaJ, DnaK and GrpE are required for fully efficient folding. Also involved, together with DnaK and GrpE, in the DNA replication of plasmids through activation of initiation proteins. This chain is Chaperone protein DnaJ, found in Klebsiella pneumoniae subsp. pneumoniae (strain ATCC 700721 / MGH 78578).